We begin with the raw amino-acid sequence, 221 residues long: Enolase-phosphatase E1 (221 aa).

This sequence belongs to the HAD-like hydrolase superfamily. MasA/MtnC family. In terms of assembly, monomer. Mg(2+) is required as a cofactor.

It catalyses the reaction 5-methylsulfanyl-2,3-dioxopentyl phosphate + H2O = 1,2-dihydroxy-5-(methylsulfanyl)pent-1-en-3-one + phosphate. It functions in the pathway amino-acid biosynthesis; L-methionine biosynthesis via salvage pathway; L-methionine from S-methyl-5-thio-alpha-D-ribose 1-phosphate: step 3/6. The protein operates within amino-acid biosynthesis; L-methionine biosynthesis via salvage pathway; L-methionine from S-methyl-5-thio-alpha-D-ribose 1-phosphate: step 4/6. Bifunctional enzyme that catalyzes the enolization of 2,3-diketo-5-methylthiopentyl-1-phosphate (DK-MTP-1-P) into the intermediate 2-hydroxy-3-keto-5-methylthiopentenyl-1-phosphate (HK-MTPenyl-1-P), which is then dephosphorylated to form the acireductone 1,2-dihydroxy-3-keto-5-methylthiopentene (DHK-MTPene). This chain is Enolase-phosphatase E1, found in Hydrogenobaculum sp. (strain Y04AAS1).